A 509-amino-acid polypeptide reads, in one-letter code: DEAD-box ATP-dependent RNA helicase CshA (509 aa).

A Q motif motif is present at residues 2–30 (QNFKELGISDKTVQTLEAMGFKEPTPIQK). The Helicase ATP-binding domain maps to 33 to 203 (IPYALEGDDI…QQFMKAPKII (171 aa)). 46–53 (AQTGTGKT) is a binding site for ATP. The DEAD box signature appears at 150–153 (DEAD). Residues 214 to 375 (QIDEYYTIVK…LRPPHRKEVL (162 aa)) enclose the Helicase C-terminal domain. Composition is skewed to basic residues over residues 440–459 (ARKN…KRGN) and 467–482 (RRSK…KKNQ). Residues 440 to 509 (ARKNRSSKGG…KGRTFADHQK (70 aa)) form a disordered region. Residues 483–492 (KKFDRRDKQQ) show a composition bias toward basic and acidic residues.

The protein belongs to the DEAD box helicase family. CshA subfamily. As to quaternary structure, oligomerizes, may be a member of the RNA degradosome.

It is found in the cytoplasm. The enzyme catalyses ATP + H2O = ADP + phosphate + H(+). DEAD-box RNA helicase possibly involved in RNA degradation. Unwinds dsRNA in both 5'- and 3'-directions, has RNA-dependent ATPase activity. This Staphylococcus epidermidis (strain ATCC 35984 / DSM 28319 / BCRC 17069 / CCUG 31568 / BM 3577 / RP62A) protein is DEAD-box ATP-dependent RNA helicase CshA.